The sequence spans 95 residues: Immunogenic miracidial antigen 8C (95 aa).

The span at 1–15 (EFTISFSSPVISTGQ) shows a compositional bias: polar residues. The disordered stretch occupies residues 1–95 (EFTISFSSPV…PKKYGSGHKY (95 aa)). Over residues 20–41 (GDEDYHDGDDDVDYTDDVDDVD) the composition is skewed to acidic residues. Over residues 45-59 (GSPSQLLQGGYQRNQ) the composition is skewed to polar residues.

Belongs to the immunogenic miracidial antigen family.

The chain is Immunogenic miracidial antigen 8C (8C) from Schistosoma japonicum (Blood fluke).